A 275-amino-acid chain; its full sequence is Small ribosomal subunit protein uS2 (275 aa).

The disordered stretch occupies residues 244-275 (REGAEASKKKATVKKKAAPRAASGESAEAAAE). Over residues 252 to 261 (KKATVKKKAA) the composition is skewed to basic residues. Over residues 262–275 (PRAASGESAEAAAE) the composition is skewed to low complexity.

This sequence belongs to the universal ribosomal protein uS2 family.

This is Small ribosomal subunit protein uS2 from Thioalkalivibrio sulfidiphilus (strain HL-EbGR7).